Consider the following 402-residue polypeptide: Proline-rich protein 25 (402 aa).

Disordered stretches follow at residues 1–29 (MART…AAAH), 109–255 (TVPG…MVGS), and 337–371 (EAAQ…CPGR). Residues 345–355 (RRTAPPRRTAS) are compositionally biased toward low complexity. A compositionally biased stretch (pro residues) spans 356-367 (PEPPAPGAPLPA).

The polypeptide is Proline-rich protein 25 (PRR25) (Homo sapiens (Human)).